The primary structure comprises 548 residues: Malate:quinone oxidoreductase (548 aa).

The tract at residues 521–548 (DKPQAADSTPKPQLKPQPVQKEVADIAL) is disordered. The segment covering 530-541 (PKPQLKPQPVQK) has biased composition (low complexity).

The protein belongs to the MQO family. FAD serves as cofactor.

The catalysed reaction is (S)-malate + a quinone = a quinol + oxaloacetate. It functions in the pathway carbohydrate metabolism; tricarboxylic acid cycle; oxaloacetate from (S)-malate (quinone route): step 1/1. The sequence is that of Malate:quinone oxidoreductase (mqo) from Escherichia coli (strain K12).